A 315-amino-acid chain; its full sequence is D-alanine--D-alanine ligase B (315 aa).

The ATP-grasp domain maps to 109–309 (KKVAAAAGVV…FAELLSWMVE (201 aa)). Residue 135–190 (PMKPPYVVKPVREGSSFGVVIVKEDQPHPPQVIGSADWKYGDEVMVEGYIAGRELT) coordinates ATP. Residues Asp259, Glu276, and Asn278 each coordinate Mg(2+).

Belongs to the D-alanine--D-alanine ligase family. The cofactor is Mg(2+). It depends on Mn(2+) as a cofactor.

Its subcellular location is the cytoplasm. The enzyme catalyses 2 D-alanine + ATP = D-alanyl-D-alanine + ADP + phosphate + H(+). Its pathway is cell wall biogenesis; peptidoglycan biosynthesis. Functionally, cell wall formation. The sequence is that of D-alanine--D-alanine ligase B from Brucella melitensis biotype 1 (strain ATCC 23456 / CCUG 17765 / NCTC 10094 / 16M).